A 1183-amino-acid polypeptide reads, in one-letter code: MAGQVVQYGRHRKRRNYARISEVLELPNLIEIQTKSYDWFLKEGLLEMFRDISPIEDFTGNLSLEFVDYRLGEPKYDLEESKNRDATYAAPLRVKVRLIIKETGEVKEQEVFMGDFPLMTDTGTFVINGAERVIVSQLVRSPSVYFNEKIDKNGRENYDATIIPNRGAWLEYETDAKDVVYVRIDRTRKLPLTVLLRALGFSTDQEIVDLLGDSEYLRNTLEKDGTENTEQALLEIYERLRPGEPPTVENAKSLLYSRFFDPKRYDLASVGRYKANKKLHLKHRLFNQKLAEPIVNSETGEIVVDEGTVLDRRKLDEIMDVLETNANSEVFELEGSVIDEPVEIQSIKVYVPNDEEGRTTTVIGNALPDSEVKCITPADIVASMSYFFNLLNGIGYTDDIDHLGNRRLRSVGELLQNQFRIGLSRMERVVRERMSIQDTDSITPQQLINIRPVIASIKEFFGSSQLSQFMDQANPLAELTHKRRLSALGPGGLTRERAQMEVRDVHYSHYGRMCPIETPEGPNIGLINSLSSYARVNEFGFIETPYRKVDLDTNSITDQIDYLTADEEDSYVVAQANSRLDENGRFLDDEVVCRFRGNNTVMAKEKMDYMDVSPKQVVSAATACIPFLENDDSNRALMGANMQRQAVPLMNPEAPFVGTGMEHVAARDSGAAITAKHRGRVEHVESNEILVRRLVEENGTEHEGELDRYPLAKFKRSNSGTCYNQRPIVSIGDVVEYNEILADGPSMELGEMALGRNVVVGFMTWDGYNYEDAVIMSERLVKDDVYTSIHIEEYESEARDTKLGPEEITRDIPNVSESALKNLDDRGIVYVGAEVKDGDILVGKVTPKGVTELTAEERLLHAIFGEKAREVRDTSLRVPHGAGGIVLDVKVFNREEGDDTLSPGVNQLVRVYIVQKRKIHVGDKMCGRHGNKGVISKIVPEEDMPYLPDGRPIDIMLNPLGVPSRMNIGQVLELHLGMAAKNLGIHVASPVFDGANDDDVWSTIEEAGMARDGKTVLYDGRTGEPFDNRISVGVMYMLKLAHMVDDKLHARSTGPYSLVTQQPLGGKAQFGGQRFGEMEVWALEAYGAAYTLQEILTYKSDDTVGRVKTYESIVKGENISRPSVPESFRVLMKELQSLGLDVKVMDEHDNEIEMADVDDEDAAERKVDLQQKSAPESQKETTD.

The segment covering 1151-1162 has biased composition (acidic residues); it reads EIEMADVDDEDA. Residues 1151–1183 are disordered; that stretch reads EIEMADVDDEDAAERKVDLQQKSAPESQKETTD.

It belongs to the RNA polymerase beta chain family. As to quaternary structure, the RNAP catalytic core consists of 2 alpha, 1 beta, 1 beta' and 1 omega subunit. When a sigma factor is associated with the core the holoenzyme is formed, which can initiate transcription.

It carries out the reaction RNA(n) + a ribonucleoside 5'-triphosphate = RNA(n+1) + diphosphate. Functionally, DNA-dependent RNA polymerase catalyzes the transcription of DNA into RNA using the four ribonucleoside triphosphates as substrates. This Staphylococcus epidermidis (strain ATCC 12228 / FDA PCI 1200) protein is DNA-directed RNA polymerase subunit beta.